The following is a 145-amino-acid chain: Large ribosomal subunit protein uL15 (145 aa).

Residues 1 to 52 (MKLNTIAPAEGSKKDRRRVGRGIGSGFGKTAGRGHKGQHARSGGYHKVGFEG) are disordered. Residues 21–31 (RGIGSGFGKTA) show a composition bias toward gly residues.

It belongs to the universal ribosomal protein uL15 family. Part of the 50S ribosomal subunit.

In terms of biological role, binds to the 23S rRNA. In Acidithiobacillus ferrooxidans (strain ATCC 53993 / BNL-5-31) (Leptospirillum ferrooxidans (ATCC 53993)), this protein is Large ribosomal subunit protein uL15.